We begin with the raw amino-acid sequence, 152 residues long: Large ribosomal subunit protein bL9 (152 aa).

The protein belongs to the bacterial ribosomal protein bL9 family.

In terms of biological role, binds to the 23S rRNA. The polypeptide is Large ribosomal subunit protein bL9 (Prochlorococcus marinus (strain MIT 9211)).